We begin with the raw amino-acid sequence, 303 residues long: tRNA-cytidine(32) 2-sulfurtransferase (303 aa).

The PP-loop motif motif lies at 45–50; sequence SGGKDS. [4Fe-4S] cluster contacts are provided by Cys-120, Cys-123, and Cys-211.

The protein belongs to the TtcA family. In terms of assembly, homodimer. Mg(2+) serves as cofactor. The cofactor is [4Fe-4S] cluster.

The protein localises to the cytoplasm. The catalysed reaction is cytidine(32) in tRNA + S-sulfanyl-L-cysteinyl-[cysteine desulfurase] + AH2 + ATP = 2-thiocytidine(32) in tRNA + L-cysteinyl-[cysteine desulfurase] + A + AMP + diphosphate + H(+). Its pathway is tRNA modification. Functionally, catalyzes the ATP-dependent 2-thiolation of cytidine in position 32 of tRNA, to form 2-thiocytidine (s(2)C32). The sulfur atoms are provided by the cysteine/cysteine desulfurase (IscS) system. This Methylobacillus flagellatus (strain ATCC 51484 / DSM 6875 / VKM B-1610 / KT) protein is tRNA-cytidine(32) 2-sulfurtransferase.